Reading from the N-terminus, the 193-residue chain is Mediator of RNA polymerase II transcription subunit 20 (193 aa).

Belongs to the Mediator complex subunit 20 family. Component of the Mediator complex.

Its subcellular location is the nucleus. Component of the Mediator complex, a coactivator involved in the regulated transcription of nearly all RNA polymerase II-dependent genes. Mediator functions as a bridge to convey information from gene-specific regulatory proteins to the basal RNA polymerase II transcription machinery. The Mediator complex, having a compact conformation in its free form, is recruited to promoters by direct interactions with regulatory proteins and serves for the assembly of a functional preinitiation complex with RNA polymerase II and the general transcription factors. In Schizosaccharomyces pombe (strain 972 / ATCC 24843) (Fission yeast), this protein is Mediator of RNA polymerase II transcription subunit 20 (med20).